We begin with the raw amino-acid sequence, 241 residues long: Diacetyl reductase [(S)-acetoin forming] (241 aa).

6–30 (LVTGAGQGIGKAIALRLVKDGFAVA) provides a ligand contact to NAD(+). A substrate-binding site is contributed by Ser-139. Tyr-152 serves as the catalytic Proton acceptor. Residue Lys-156 is part of the active site.

It belongs to the short-chain dehydrogenases/reductases (SDR) family. Homotetramer.

It carries out the reaction (S)-acetoin + NAD(+) = diacetyl + NADH + H(+). In terms of biological role, catalyzes the irreversible reduction of 2,3-butanediol to (S)-acetoin in the presence of NADH. This is Diacetyl reductase [(S)-acetoin forming] (budC) from Raoultella terrigena (Klebsiella terrigena).